We begin with the raw amino-acid sequence, 891 residues long: 26S proteasome non-ATPase regulatory subunit 2 homolog B (891 aa).

The segment at 1 to 43 (MAPVPDPNSVGGGAKRDEATTKIPSKDSKKKDDKKEEDLSEED) is disordered. Residues 14-37 (AKRDEATTKIPSKDSKKKDDKKEE) are compositionally biased toward basic and acidic residues. 7 PC repeats span residues 414-447 (SAVA…PVVA), 448-484 (GALL…SVRI), 485-519 (GAIM…PLDV), 522-556 (FAAL…AELG), 565-594 (LGLG…KIRK), 674-705 (LALG…EVAM), and 724-739 (AGML…KDAS).

This sequence belongs to the proteasome subunit S2 family. In terms of assembly, component of the 19S regulatory particle (RP/PA700) base subcomplex of the 26S proteasome. The 26S proteasome is composed of a core protease (CP), known as the 20S proteasome, capped at one or both ends by the 19S regulatory particle (RP/PA700). The RP/PA700 complex is composed of at least 17 different subunits in two subcomplexes, the base and the lid, which form the portions proximal and distal to the 20S proteolytic core, respectively. Post-translationally, ubiquitinated. In terms of tissue distribution, expressed in stems, leaves, buds, flowers, siliques and developing seeds.

Acts as a regulatory subunit of the 26 proteasome which is involved in the ATP-dependent degradation of ubiquitinated proteins. In Arabidopsis thaliana (Mouse-ear cress), this protein is 26S proteasome non-ATPase regulatory subunit 2 homolog B (RPN1B).